The primary structure comprises 165 residues: Nascent polypeptide-associated complex subunit alpha (165 aa).

The 65-residue stretch at 14–78 (NRNEKKAREL…AKVDNFTQRL (65 aa)) folds into the NAC-A/B domain. In terms of domain architecture, UBA spans 126-165 (LSNDDIDLVVQQTNATKGQAIKALKEHNGDIVNAIMSLSK).

Belongs to the NAC-alpha family. As to quaternary structure, part of the nascent polypeptide-associated complex (NAC), consisting of EGD2 and EGD1. NAC associates with ribosomes via EGD1.

The protein localises to the cytoplasm. Its subcellular location is the nucleus. Component of the nascent polypeptide-associated complex (NAC), a dynamic component of the ribosomal exit tunnel, protecting the emerging polypeptides from interaction with other cytoplasmic proteins to ensure appropriate nascent protein targeting. The NAC complex also promotes mitochondrial protein import by enhancing productive ribosome interactions with the outer mitochondrial membrane and blocks the inappropriate interaction of ribosomes translating non-secretory nascent polypeptides with translocation sites in the membrane of the endoplasmic reticulum. EGD2 may also be involved in transcription regulation. The sequence is that of Nascent polypeptide-associated complex subunit alpha (EGD2) from Candida glabrata (strain ATCC 2001 / BCRC 20586 / JCM 3761 / NBRC 0622 / NRRL Y-65 / CBS 138) (Yeast).